Consider the following 185-residue polypeptide: Ribosome-recycling factor (185 aa).

The protein belongs to the RRF family.

It localises to the cytoplasm. Functionally, responsible for the release of ribosomes from messenger RNA at the termination of protein biosynthesis. May increase the efficiency of translation by recycling ribosomes from one round of translation to another. This chain is Ribosome-recycling factor, found in Clavibacter sepedonicus (Clavibacter michiganensis subsp. sepedonicus).